A 396-amino-acid polypeptide reads, in one-letter code: G-protein coupled receptor 84 (396 aa).

The Extracellular segment spans residues 1–26; the sequence is MWNASDVNFSCYHESVLGYRYVAVSW. Residues N3 and N8 are each glycosylated (N-linked (GlcNAc...) asparagine). A helical transmembrane segment spans residues 27 to 47; it reads GIVVAVTGTVGNVLTLLALAI. Residues 48–57 are Cytoplasmic-facing; the sequence is QPKLRTRFNL. The chain crosses the membrane as a helical span at residues 58 to 78; it reads LIANLTVADLLYCTLLQPFSV. The Extracellular portion of the chain corresponds to 79-94; the sequence is DTYLHLHWRTGATFCQ. A helical membrane pass occupies residues 95–115; that stretch reads IFGFLLFVSNSVSILTLCLIA. Topologically, residues 116-144 are cytoplasmic; that stretch reads LGRYLLIAHPKLFPQVFSAKGIVLALVST. The chain crosses the membrane as a helical span at residues 145 to 165; it reads WVVAVASFAPLWPIYILVPVV. The Extracellular segment spans residues 166–180; it reads CTCSFDRIRGQPYTT. A helical membrane pass occupies residues 181-201; that stretch reads ILMGIYFVVGLSSVGVFYCLI. The Cytoplasmic segment spans residues 202–320; that stretch reads HQQVKRAAQA…PSEFGKVTRM (119 aa). Phosphoserine occurs at positions 221 and 224. The interval 243–310 is disordered; it reads SGLASGGPSE…TKGAQRAQDS (68 aa). A phosphothreonine mark is found at T263 and T264. The helical transmembrane segment at 321 to 341 threads the bilayer; it reads CFAVFLCFTLSYIPFLLLNIL. At 342 to 352 the chain is on the extracellular side; that stretch reads DAKVQAPRVVH. A helical membrane pass occupies residues 353–373; sequence MLAANLTWLNGCINPVLYAAM. Residues 374–396 lie on the Cytoplasmic side of the membrane; it reads NRQFRQAYGSLLRRGPQSFHRFH.

Belongs to the G-protein coupled receptor 1 family. As to quaternary structure, interacts with ARRB2 and ARR3. In terms of processing, phosphorylated by a subset of GPR84-activating ligands. Constitutively phosphorylated at Ser-221 and Ser-224 in the absence of 2-HTP. By contrast, Thr-263 and Thr-264 are phosphorylated only following prior cell treatment with 2-HTP.

Its subcellular location is the cell membrane. Its function is as follows. G protein-coupled receptor that responds endogenously to dietary fatty acids or nutrient, specifically medium-chain free fatty acid (FFA) with carbon chain lengths of C9 to C14. Capric acid (C10:0), undecanoic acid (C11:0) and lauric acid (C12:0) are the most potent agonists. In immune cells, functions as a pro-inflammatory receptor via 6-OAU and promotes the expression of pro-inflammatory mediators such as TNFalpha, IL-6 and IL-12B as well as stimulating chemotactic responses through activation of signaling mediators AKT, ERK and NF-kappa-B. In addition, triggers increased bacterial adhesion and phagocytosis in macrophages and regulates pro-inflammatory function via enhancing NLRP3 inflammasome activation. Also plays an important role in inflammation by modulating neutrophil functions. Mechanistically, promotes neutrophil chemotaxis, reactive oxygen species (ROS) production and degranulation via LYN-AKT/ERK pathway. To regulate ROS, communicates with the two formyl peptide receptors FPR2 and FPR1 to control the NADPH oxidase activity in neutrophils. In Bos taurus (Bovine), this protein is G-protein coupled receptor 84 (GPR84).